We begin with the raw amino-acid sequence, 505 residues long: 2,3-bisphosphoglycerate-independent phosphoglycerate mutase (505 aa).

Residues Asp-13 and Ser-63 each contribute to the Mn(2+) site. Ser-63 serves as the catalytic Phosphoserine intermediate. Residues His-124, 153–154 (RD), Arg-183, Arg-189, 254–257 (RADR), and Lys-329 each bind substrate. The Mn(2+) site is built by Asp-395, His-399, Asp-436, His-437, and His-455.

This sequence belongs to the BPG-independent phosphoglycerate mutase family. As to quaternary structure, monomer. Mn(2+) is required as a cofactor.

It carries out the reaction (2R)-2-phosphoglycerate = (2R)-3-phosphoglycerate. It participates in carbohydrate degradation; glycolysis; pyruvate from D-glyceraldehyde 3-phosphate: step 3/5. In terms of biological role, catalyzes the interconversion of 2-phosphoglycerate and 3-phosphoglycerate. The protein is 2,3-bisphosphoglycerate-independent phosphoglycerate mutase of Agrobacterium fabrum (strain C58 / ATCC 33970) (Agrobacterium tumefaciens (strain C58)).